The chain runs to 333 residues: Probable G-protein coupled receptor 33 (333 aa).

The Extracellular portion of the chain corresponds to 1-30 (MDLINSTDYLINASTLVRNSTQFLAPASKM). N-linked (GlcNAc...) asparagine glycosylation is found at N5, N12, and N19. A helical transmembrane segment spans residues 31 to 53 (IIALSLYISSIIGTITNGLYLWV). Residues 54 to 64 (LRFKMKQTVNT) lie on the Cytoplasmic side of the membrane. A helical transmembrane segment spans residues 65 to 86 (LLFFHLILSYFISTMILPFMAT). The Extracellular portion of the chain corresponds to 87–103 (SQLQDNHWNFGTALCKV). An intrachain disulfide couples C101 to C179. The helical transmembrane segment at 104–124 (FNGTLSLGMFTSVFFLSAIGL) threads the bilayer. Residues 125–143 (DRYLLTLHPVWSQQHRTPR) are Cytoplasmic-facing. Residues 144 to 165 (WASSIVLGVWISAAALSIPYLI) form a helical membrane-spanning segment. Residues 166 to 209 (FRQTHHDRKGKVTCQNNYAVSTNWESKEMQALRQWIHVACFISR) are Extracellular-facing. A helical transmembrane segment spans residues 210–230 (FLLGFLLPFFIIIFCYERVAS). Residues 231–246 (KVKERSLFKSSKPFKV) are Cytoplasmic-facing. A helical membrane pass occupies residues 247–268 (MMTAIISFFVCWMPYHIHQGLL). Residues 269-283 (LTMNQSLLLELTLIL) are Extracellular-facing. N272 carries an N-linked (GlcNAc...) asparagine glycan. Residues 284 to 303 (TVLTTSFNTIFSPTLYLFVG) traverse the membrane as a helical segment. The Cytoplasmic segment spans residues 304-333 (ENFKKVFKKSILALFESTFSEDSSVERTQT).

It belongs to the G-protein coupled receptor 1 family.

It localises to the cell membrane. Orphan receptor; could be a chemoattractant receptor. The chain is Probable G-protein coupled receptor 33 (GPR33) from Pan paniscus (Pygmy chimpanzee).